A 941-amino-acid chain; its full sequence is MVIIGPRGPGSQRLLLSLLLLAAWEVGSGQLHYSVYEEAKHGTFVGRIAQDLGLELAELVPRLFRVASKRHGDLLEVNLQNGILFVNSRIDREKLCGRSAECSIHLEVIVDRPLQVFHVDVEVKDINDNPPVFREREQKVPVSESAPLDSHFPLEGASDADIGVNSLLTYALSLNEHFELKIKTKKDKSILPELVLRKLLDREQTPKLNLLLMVIDGGKPELTGSVQIQITVLDVNDNGPAFDKPSYKVVLSENVQNDTRVIQLNASDPDEGLNGEISYGIKMILPVSEKCMFSINPDTGEIRIYGELDFEENNAYEIQVNAIDKGIPSMAGHSMVLVEVLDVNDNVPEVMVTSLSLPVQEDAQVGTVIALISVSDRDSGANGQVICSLTPHVPFKLVSTYKNYYSLVLDSALDRESVSAYELVVTARDGGSPSLWATARVSVEVADVNDNAPAFAQPEYTVFVKENNPPGCHIFTVSAWDADAQKNALVSYSLVERRVGEHALSSYVSVHAESGKVYALQPLDHEELELLQFQVSARDAGVPPLGSNVTLQVFVLDENDNAPALLATPAGSAGGAVSELVPRSVGAGHVVAKVRAVDADSGYNAWLSYELQPAAVGAHIPFHVGLYTGEISTTRILDEADAPRHRLLVLVKDHGEPALTSTATVLVSLVENGQAPKTSSRASVGAVDPEAALVDINVYLIIAICAVSSLLVLTLLLYTALRCSAPPTVSRCAPGKPTLVCSSAVGSWSYSQQRRQRVCSGESPPKTDLMAFSPSLQLSREDCLNPPSEPRQPNPDWRYSASLRAGMHSSVHLEEAGILRAGPGGPDQQWPTVSSATPEPEAGEVSPPVGAGVNSNSWTFKYGPGNPKQSGPGELPDKFIIPGSPAIISIRQEPANSQIDKSDFITFGKKEETKKKKKKKKGNKTQEKKEKGNSTTDNSDQ.

Residues 1 to 29 (MVIIGPRGPGSQRLLLSLLLLAAWEVGSG) form the signal peptide. Cadherin domains lie at 30–133 (QLHY…PPVF), 134–242 (RERE…GPAF), 243–350 (DKPS…VPEV), 351–455 (MVTS…APAF), 456–565 (AQPE…APAL), and 581–678 (VPRS…APKT). The Extracellular segment spans residues 30 to 697 (QLHYSVYEEA…DPEAALVDIN (668 aa)). N-linked (GlcNAc...) asparagine glycosylation is found at asparagine 257 and asparagine 265. N-linked (GlcNAc...) asparagine glycosylation occurs at asparagine 548. A helical membrane pass occupies residues 698–718 (VYLIIAICAVSSLLVLTLLLY). Residues 719 to 941 (TALRCSAPPT…GNSTTDNSDQ (223 aa)) lie on the Cytoplasmic side of the membrane. PXXP repeat units lie at residues 734–737 (PGKP), 790–793 (PRQP), 823–826 (PGGP), 863–866 (GPGN), and 882–885 (PGSP). The segment at 734–885 (PGKPTLVCSS…PDKFIIPGSP (152 aa)) is 5 X 4 AA repeats of P-X-X-P. Residues 818–941 (ILRAGPGGPD…GNSTTDNSDQ (124 aa)) form a disordered region. Positions 900–914 (DKSDFITFGKKEETK) are enriched in basic and acidic residues.

Its subcellular location is the cell membrane. Functionally, potential calcium-dependent cell-adhesion protein. May be involved in the establishment and maintenance of specific neuronal connections in the brain. This is Protocadherin alpha-12 (PCDHA12) from Pan troglodytes (Chimpanzee).